A 487-amino-acid polypeptide reads, in one-letter code: Inosine-5'-monophosphate dehydrogenase (487 aa).

CBS domains are found at residues 93-152 (VVTE…VTAV) and 153-214 (MTPK…CKDE). NAD(+) contacts are provided by residues D248, 248–250 (DSS), and 298–300 (GIG). Positions 300 and 302 each coordinate K(+). S303 is a binding site for IMP. C305 contributes to the K(+) binding site. C305 functions as the Thioimidate intermediate in the catalytic mechanism. IMP-binding positions include 338–340 (DGG), 361–362 (GS), and 385–389 (YRGMG). R401 acts as the Proton acceptor in catalysis. Residue E415 coordinates IMP. K(+) contacts are provided by E469, S470, and H471.

Belongs to the IMPDH/GMPR family. In terms of assembly, homotetramer. The cofactor is K(+).

The enzyme catalyses IMP + NAD(+) + H2O = XMP + NADH + H(+). It functions in the pathway purine metabolism; XMP biosynthesis via de novo pathway; XMP from IMP: step 1/1. With respect to regulation, mycophenolic acid (MPA) is a non-competitive inhibitor that prevents formation of the closed enzyme conformation by binding to the same site as the amobile flap. In contrast, mizoribine monophosphate (MZP) is a competitive inhibitor that induces the closed conformation. MPA is a potent inhibitor of mammalian IMPDHs but a poor inhibitor of the bacterial enzymes. MZP is a more potent inhibitor of bacterial IMPDH. Functionally, catalyzes the conversion of inosine 5'-phosphate (IMP) to xanthosine 5'-phosphate (XMP), the first committed and rate-limiting step in the de novo synthesis of guanine nucleotides, and therefore plays an important role in the regulation of cell growth. This Yersinia pestis protein is Inosine-5'-monophosphate dehydrogenase.